The following is a 270-amino-acid chain: Vegetative storage protein 1 (270 aa).

An N-terminal signal peptide occupies residues 1 to 17 (MKILSLSLLLLLAATVS). 2 N-linked (GlcNAc...) asparagine glycosylation sites follow: N115 and N215.

This sequence belongs to the APS1/VSP family. As to expression, expressed in leaves and in gynoecia, especially in styles, the basal and distal ends of ovaries and in siliques.

Its function is as follows. May function as somatic storage protein during early seedling development. This chain is Vegetative storage protein 1 (VSP1), found in Arabidopsis thaliana (Mouse-ear cress).